The chain runs to 75 residues: MKLCATFLLVLVTLPLVTGEKSSERSLSGAILRGVRRTCSRRGHRCIRDSQCCGGMCCQGNRCFVAIRRCFHLPF.

The signal sequence occupies residues 1–19 (MKLCATFLLVLVTLPLVTG). The propeptide occupies 20-36 (EKSSERSLSGAILRGVR). Disulfide bonds link Cys39-Cys53, Cys46-Cys58, Cys52-Cys63, and Cys57-Cys70.

As to expression, expressed by the venom duct.

The protein resides in the secreted. Its function is as follows. Both natural (L-Leu form) and synthetic (D-Leu from) peptides equally cause sensitivity to touch and body tremor. Neither L-Leu form nor D-Leu form is active on nerve-muscle preparation. The polypeptide is Conotoxin ar11a (Conus arenatus (Sand-dusted cone)).